A 183-amino-acid chain; its full sequence is uncharacterized protein (183 aa).

This sequence belongs to the Bcl-2 family.

This is an uncharacterized protein from Equine herpesvirus 2 (strain 86/87) (EHV-2).